Here is a 331-residue protein sequence, read N- to C-terminus: ADP,ATP carrier protein 1, mitochondrial (331 aa).

3 Solcar repeats span residues 29 to 122 (KNFA…FKRM), 134 to 226 (KWFG…LKPV), and 238 to 320 (ASFA…LQIL). Helical transmembrane passes span 31 to 58 (FAID…VKLL), 99 to 123 (TANV…KRMF), 132 to 152 (YWKW…SSLF), 202 to 223 (FNIS…YDSL), and 237 to 257 (FASF…SYPI). 2 residues coordinate ADP: Arg-104 and Lys-116. Arg-261 provides a ligand contact to ADP. The segment at 261–266 (RRRMMM) is important for transport activity. The short motif at 261-266 (RRRMMM) is the Nucleotide carrier signature motif element. The chain crosses the membrane as a helical span at residues 297–317 (AGANILRAIAGAGVLSGYDQL).

Belongs to the mitochondrial carrier (TC 2.A.29) family. As to quaternary structure, monomer.

The protein resides in the mitochondrion inner membrane. The catalysed reaction is ADP(in) + ATP(out) = ADP(out) + ATP(in). With respect to regulation, the matrix-open state (m-state) is inhibited by the membrane-permeable bongkrekic acid (BKA). The cytoplasmic-open state (c-state) is inhibited by the membrane-impermeable toxic inhibitor carboxyatractyloside (CATR). ADP:ATP antiporter that mediates import of ADP into the mitochondrial matrix for ATP synthesis, and export of ATP out to fuel the cell. Cycles between the cytoplasmic-open state (c-state) and the matrix-open state (m-state): operates by the alternating access mechanism with a single substrate-binding site intermittently exposed to either the cytosolic (c-state) or matrix (m-state) side of the inner mitochondrial membrane. The sequence is that of ADP,ATP carrier protein 1, mitochondrial (ANT-G1) from Triticum aestivum (Wheat).